The sequence spans 184 residues: ATP synthase subunit b, chloroplastic (184 aa).

Residues 27 to 49 traverse the membrane as a helical segment; it reads LATNPINLSVVLGVLIFFGKGVL.

Belongs to the ATPase B chain family. As to quaternary structure, F-type ATPases have 2 components, F(1) - the catalytic core - and F(0) - the membrane proton channel. F(1) has five subunits: alpha(3), beta(3), gamma(1), delta(1), epsilon(1). F(0) has four main subunits: a(1), b(1), b'(1) and c(10-14). The alpha and beta chains form an alternating ring which encloses part of the gamma chain. F(1) is attached to F(0) by a central stalk formed by the gamma and epsilon chains, while a peripheral stalk is formed by the delta, b and b' chains.

Its subcellular location is the plastid. It localises to the chloroplast thylakoid membrane. F(1)F(0) ATP synthase produces ATP from ADP in the presence of a proton or sodium gradient. F-type ATPases consist of two structural domains, F(1) containing the extramembraneous catalytic core and F(0) containing the membrane proton channel, linked together by a central stalk and a peripheral stalk. During catalysis, ATP synthesis in the catalytic domain of F(1) is coupled via a rotary mechanism of the central stalk subunits to proton translocation. Its function is as follows. Component of the F(0) channel, it forms part of the peripheral stalk, linking F(1) to F(0). This chain is ATP synthase subunit b, chloroplastic, found in Atropa belladonna (Belladonna).